Consider the following 425-residue polypeptide: uncharacterized protein (425 aa).

The F-box domain occupies 2–53 (SFNLLDLPIVPRQKALKYLEPIDLFELSLCSKRMAQSVRDLKIEASAHFITL).

This is an uncharacterized protein from Caenorhabditis elegans.